The chain runs to 137 residues: uncharacterized protein (137 aa).

The helical transmembrane segment at 75-91 (MFLDAMVILAVASGVSL) threads the bilayer. A disordered region spans residues 93-116 (PQLPGRRSHNASTPGAKKPGKDHG).

It is found in the membrane. This is an uncharacterized protein from Saccharomyces cerevisiae (strain ATCC 204508 / S288c) (Baker's yeast).